A 579-amino-acid chain; its full sequence is MIRTHEAGTLRADHAEQNVVLAGWVARRRDHGGVVFLDLRDASGIVQVVVREDELAHDLRSEYCIKVTGTVRIRPEGNENPDIATGEIEVVASHIEVLSESAPLPFPLDGNQEISEEARLRYRYLDMRRPETAEALRVRSRATYIAHEVMNDNGFVYVETPYLTRSTPEGARDFLVPVRLQPGHWYALPQSPQLFKQLLMVGGMERYYQLTRCFRDEDFRADRQPEFTQIDIEMSFVDEEDLFDIGEKLFTRLLREVRGVELPRPFRRMKFAEAMDRFGTDKPDLRFGQELVELTDFFANTPFRVFQAPYVGAVVMPGGASQTRRELDAWQEWARSRGAKGLAYVLVHEDGTLGGPVAKNLSEEERAGLAERVGAKPGDAIFFSAGERTASQELLGAARLEIGKRCGLIDESAWEVLWITDMPMFEKDDEGGWTSVHHPFTAPAQEVADTFHNDPGSATARAFDLVMNGYELASGSIRIHRAEMQQRVFDTIGLSKDEAETKFGFLLEAFQFGPPPHGGLAVGWDRLVMLLAGQSTIRDVIAFPKTASGADPLTGAPTPITAEQRREAGVDAVPEQATS.

Residue E169 coordinates L-aspartate. An aspartate region spans residues 193 to 196 (QLFK). R215 provides a ligand contact to L-aspartate. ATP-binding positions include 215–217 (RDE) and Q224. H437 contributes to the L-aspartate binding site. E471 serves as a coordination point for ATP. R478 contributes to the L-aspartate binding site. 523 to 526 (GWDR) contributes to the ATP binding site. The segment at 551–579 (DPLTGAPTPITAEQRREAGVDAVPEQATS) is disordered.

This sequence belongs to the class-II aminoacyl-tRNA synthetase family. Type 1 subfamily. In terms of assembly, homodimer.

The protein localises to the cytoplasm. It carries out the reaction tRNA(Asx) + L-aspartate + ATP = L-aspartyl-tRNA(Asx) + AMP + diphosphate. Functionally, aspartyl-tRNA synthetase with relaxed tRNA specificity since it is able to aspartylate not only its cognate tRNA(Asp) but also tRNA(Asn). Reaction proceeds in two steps: L-aspartate is first activated by ATP to form Asp-AMP and then transferred to the acceptor end of tRNA(Asp/Asn). The chain is Aspartate--tRNA(Asp/Asn) ligase from Thermobifida fusca (strain YX).